The primary structure comprises 335 residues: Glycerol-3-phosphate dehydrogenase [NAD(P)+] (335 aa).

Ser10, Phe11, Arg31, and Lys105 together coordinate NADPH. Residues Lys105, Gly136, and Ser138 each contribute to the sn-glycerol 3-phosphate site. NADPH is bound at residue Ala140. Sn-glycerol 3-phosphate is bound by residues Lys191, Asp244, Ser254, Arg255, and Asn256. Lys191 acts as the Proton acceptor in catalysis. Position 255 (Arg255) interacts with NADPH. NADPH-binding residues include Val279 and Glu281.

The protein belongs to the NAD-dependent glycerol-3-phosphate dehydrogenase family.

It localises to the cytoplasm. It catalyses the reaction sn-glycerol 3-phosphate + NAD(+) = dihydroxyacetone phosphate + NADH + H(+). The catalysed reaction is sn-glycerol 3-phosphate + NADP(+) = dihydroxyacetone phosphate + NADPH + H(+). The protein operates within membrane lipid metabolism; glycerophospholipid metabolism. Functionally, catalyzes the reduction of the glycolytic intermediate dihydroxyacetone phosphate (DHAP) to sn-glycerol 3-phosphate (G3P), the key precursor for phospholipid synthesis. The polypeptide is Glycerol-3-phosphate dehydrogenase [NAD(P)+] (Leptospira interrogans serogroup Icterohaemorrhagiae serovar Lai (strain 56601)).